The primary structure comprises 88 residues: Elongation factor 1-beta (88 aa).

Belongs to the EF-1-beta/EF-1-delta family.

Its function is as follows. Promotes the exchange of GDP for GTP in EF-1-alpha/GDP, thus allowing the regeneration of EF-1-alpha/GTP that could then be used to form the ternary complex EF-1-alpha/GTP/AAtRNA. The polypeptide is Elongation factor 1-beta (ef1b) (Archaeoglobus fulgidus (strain ATCC 49558 / DSM 4304 / JCM 9628 / NBRC 100126 / VC-16)).